Reading from the N-terminus, the 57-residue chain is Probable mRNA interferase HicA 1 (57 aa).

It belongs to the HicA mRNA interferase family. Probably forms a complex with the cognate antitoxin HicB 1 which inhibits the mRNA interferase activity.

Functionally, toxic component of a type II toxin-antitoxin (TA) system. A probable translation-independent mRNA interferase. The polypeptide is Probable mRNA interferase HicA 1 (hicA1) (Photorhabdus laumondii subsp. laumondii (strain DSM 15139 / CIP 105565 / TT01) (Photorhabdus luminescens subsp. laumondii)).